The following is a 328-amino-acid chain: Putative GDP-L-fucose synthase 2 (328 aa).

Ala-2 carries the post-translational modification N-acetylalanine. Residue Gly-26–Gly-32 participates in NADP(+) binding. Tyr-152 acts as the Proton donor/acceptor in catalysis. NADP(+) is bound by residues Lys-156, Pro-179 to Leu-182, and His-195. Substrate-binding residues include Arg-203, Trp-218, Arg-225, and Asp-285.

Belongs to the NAD(P)-dependent epimerase/dehydratase family. Fucose synthase subfamily. Homodimer.

The catalysed reaction is GDP-beta-L-fucose + NADP(+) = GDP-4-dehydro-alpha-D-rhamnose + NADPH + H(+). It participates in nucleotide-sugar biosynthesis; GDP-L-fucose biosynthesis via de novo pathway; GDP-L-fucose from GDP-alpha-D-mannose: step 2/2. Catalyzes the two-step NADP-dependent conversion of GDP-4-dehydro-6-deoxy-D-mannose to GDP-fucose, involving an epimerase and a reductase reaction. This Arabidopsis thaliana (Mouse-ear cress) protein is Putative GDP-L-fucose synthase 2 (GER2).